Consider the following 205-residue polypeptide: uncharacterized protein (205 aa).

The chain crosses the membrane as a helical span at residues Ile-5–Tyr-27.

The protein to T.maritima TM1570.

The protein localises to the membrane. This is an uncharacterized protein from Aquifex aeolicus (strain VF5).